We begin with the raw amino-acid sequence, 317 residues long: Melanocyte-stimulating hormone receptor (317 aa).

The tract at residues 1-28 (MPMQGAQGRLRGSLNATPPTTPHSGLAG) is disordered. Over 1 to 37 (MPMQGAQGRLRGSLNATPPTTPHSGLAGNQTGPWCLE) the chain is Extracellular. N29 carries an N-linked (GlcNAc...) asparagine glycan. Residues 38–63 (VSIPDELFLSLGLVSLVENMLVVAAI) form a helical membrane-spanning segment. The Cytoplasmic portion of the chain corresponds to 64–72 (AKNRNLHSP). The chain crosses the membrane as a helical span at residues 73-93 (MYYFICCLAVSDLLVSVSNVL). At 94–118 (ETAVMLLLEAGVLAAWAGVVQQLDN) the chain is on the extracellular side. A helical transmembrane segment spans residues 119–140 (AIDVFICGSMVSSLCFLGAIAV). At 141–163 (DRYITIFYALRYHSIVTLPRARW) the chain is on the cytoplasmic side. The helical transmembrane segment at 164 to 183 (AIATIWAASVVCSTLFIAYY) threads the bilayer. The Extracellular segment spans residues 184-191 (DCTAVLLC). A helical membrane pass occupies residues 192 to 211 (LVSFFLALVVLMAVLYMHML). Residues 212-240 (ARACLHARSIARLHKRWRPVHQGLGLKGA) lie on the Cytoplasmic side of the membrane. A helical membrane pass occupies residues 241-266 (ATLSILLGSFFLCWGPFFLHLTLIVL). The Extracellular portion of the chain corresponds to 267–279 (CPQHPTCSCVFKN). Residues 280-300 (FKLFLTLIICNSIVDPLIYAF) form a helical membrane-spanning segment. At 301-317 (RSQELRKTLKEVLLCSW) the chain is on the cytoplasmic side. A lipid anchor (S-palmitoyl cysteine) is attached at C315.

The protein belongs to the G-protein coupled receptor 1 family. Interacts with MGRN1, but does not undergo MGRN1-mediated ubiquitination; this interaction competes with GNAS-binding and thus inhibits agonist-induced cAMP production. Interacts with OPN3; the interaction results in a decrease in MC1R-mediated cAMP signaling and ultimately a decrease in melanin production in melanocytes.

The protein localises to the cell membrane. Functionally, receptor for MSH (alpha, beta and gamma) and ACTH. The activity of this receptor is mediated by G proteins which activate adenylate cyclase. Mediates melanogenesis, the production of eumelanin (black/brown) and phaeomelanin (red/yellow), via regulation of cAMP signaling in melanocytes. This chain is Melanocyte-stimulating hormone receptor (MC1R), found in Mammuthus primigenius (Siberian woolly mammoth).